The sequence spans 156 residues: Ribosomal RNA large subunit methyltransferase H (156 aa).

S-adenosyl-L-methionine contacts are provided by residues Leu73, Gly104, and 123-128 (ISSMTL).

The protein belongs to the RNA methyltransferase RlmH family. In terms of assembly, homodimer.

The protein resides in the cytoplasm. It carries out the reaction pseudouridine(1915) in 23S rRNA + S-adenosyl-L-methionine = N(3)-methylpseudouridine(1915) in 23S rRNA + S-adenosyl-L-homocysteine + H(+). In terms of biological role, specifically methylates the pseudouridine at position 1915 (m3Psi1915) in 23S rRNA. The protein is Ribosomal RNA large subunit methyltransferase H of Burkholderia cenocepacia (strain ATCC BAA-245 / DSM 16553 / LMG 16656 / NCTC 13227 / J2315 / CF5610) (Burkholderia cepacia (strain J2315)).